We begin with the raw amino-acid sequence, 791 residues long: von Willebrand factor A domain-containing protein 2 (791 aa).

Positions 1 to 23 are cleaved as a signal peptide; it reads MPPLLLLPAIYMLLFFRVSPTIS. Residues 51–221 form the VWFA 1 domain; that stretch reads DILFLLDGSH…DATNGLLSTL (171 aa). N146 carries an N-linked (GlcNAc...) asparagine glycan. In terms of domain architecture, EGF-like 1 spans 295–332; it reads PGPCDSQPCQNGGTCIPEGVDRYHCLCPLAFGGEVNCA. Cystine bridges form between C298–C309, C303–C319, and C321–C331. VWFA domains follow at residues 342–516 and 530–704; these read DVLF…QRRL and DLVF…IEWL. The region spanning 711-747 is the EGF-like 2 domain; that stretch reads PVNLCKPSPCMNEGTCVLKNGSYRCECRGGWEGPHCE. Intrachain disulfides connect C715/C726, C720/C735, and C737/C746. Residues 762–791 form a disordered region; that stretch reads HQEPAGLQGPTPSQQAPKHLRIGKALSSAK.

In terms of assembly, forms monomers and multimers. As to expression, detected in uterus, kidney, and skin. Also detected in intestine and lung of adult mice, and in calvaria, femur, brain, heart, intestine, skeletal muscle, and lung of newborn mice.

It is found in the secreted. This is von Willebrand factor A domain-containing protein 2 (Vwa2) from Mus musculus (Mouse).